The following is a 365-amino-acid chain: MAVYVVTGKLGAGKTLVAVSRIQRTLAKGGIVATNLNLKLHHFPQVGRYAKQCRVMRIADKPTLEDLEAIGRGNLSYDESKNGLIVLDECGTWFNSRNWSDKSRQPVIDWFLHARKLGWDVIFIIQDISLMDKQAREALAEHVVYCRRLDKLNIPIIGGLISVLSGGRLPLPKVHFGIVKYGDNPQSLTVDKWIYTGTDLYAAYDTKQIFTSDRELSPPFCPVSPYYTHGIFAVKRDAKYYMRMTKIYFKKMNRVWLMASFLALGAGVGFFYKSRQINEQLSNMPVASAQANTTKTDHTIDELPRLSINSFAQMGYDVNVSFKDAKGKIYYSFDLMKSGYALDIKDSCHITLRKRNYIQQVTCEG.

ATP is bound at residue 8-15; sequence GKLGAGKT. The chain crosses the membrane as a helical span at residues 255 to 272; sequence VWLMASFLALGAGVGFFY.

Belongs to the inovirus G1P protein family. In terms of assembly, interacts with G4P; this interaction results in a complex that spans the inner an outer host membranes.

It is found in the host membrane. In terms of biological role, isoform G1P plays an essential role in phage assembly. It is required to increase the number of adhesion zones between the inner and outer membranes of the host cell. The extrusion of neo-synthesized phages occurs at these adhesion sites. May be involved with G4P in creating zone through which the phage assembled and extruded. Its function is as follows. Isoform G11P is also involved in phage assembly, probably playing a structural role in the formation of the phage assembly site. In Escherichia coli (Bacteriophage I2-2), this protein is Gene 1 protein (I).